Here is a 162-residue protein sequence, read N- to C-terminus: MLKIGFGYDVHPFAENRRLILGGVVINHPKGYGLLGHSDGDVFFHALIDSLLGMCGLGSIGEYFPESKEFENISSSILLEKTIDLINKRYIVKINNIDVVIISKSVNISSITGQIKNNTSCILNLEVSRINLKGKSGNGLGVGGNDQGIEVYCTILGEIDEI.

A divalent metal cation contacts are provided by Asp9 and His11. 4-CDP-2-C-methyl-D-erythritol 2-phosphate-binding positions include Asp9 to His11 and His37 to Ser38. An a divalent metal cation-binding site is contributed by His45.

This sequence belongs to the IspF family. In terms of assembly, homotrimer. Requires a divalent metal cation as cofactor.

The enzyme catalyses 4-CDP-2-C-methyl-D-erythritol 2-phosphate = 2-C-methyl-D-erythritol 2,4-cyclic diphosphate + CMP. It functions in the pathway isoprenoid biosynthesis; isopentenyl diphosphate biosynthesis via DXP pathway; isopentenyl diphosphate from 1-deoxy-D-xylulose 5-phosphate: step 4/6. Functionally, involved in the biosynthesis of isopentenyl diphosphate (IPP) and dimethylallyl diphosphate (DMAPP), two major building blocks of isoprenoid compounds. Catalyzes the conversion of 4-diphosphocytidyl-2-C-methyl-D-erythritol 2-phosphate (CDP-ME2P) to 2-C-methyl-D-erythritol 2,4-cyclodiphosphate (ME-CPP) with a corresponding release of cytidine 5-monophosphate (CMP). The chain is 2-C-methyl-D-erythritol 2,4-cyclodiphosphate synthase from Petrotoga mobilis (strain DSM 10674 / SJ95).